The chain runs to 199 residues: MYVGRIVAVGCSGDAVWVGYRVSSRSFPNRRATASGSSVFVHPVDPSDVLKNPYITYPCIRASNDFAVVSNGDHTDMIFDRIEDGSGPLDAVALSLVAYGYERDDLRTPRIAGVVSGRSAVLGIAAHDEIRVRKIELQDGDAWMVATYEKTGFEPVSMEGASASSIARSLFGLPFERPVCSAAAFRRDDGFELAVYNPR.

It belongs to the archaeal IMP cyclohydrolase family.

The enzyme catalyses IMP + H2O = 5-formamido-1-(5-phospho-D-ribosyl)imidazole-4-carboxamide. Its pathway is purine metabolism; IMP biosynthesis via de novo pathway; IMP from 5-formamido-1-(5-phospho-D-ribosyl)imidazole-4-carboxamide: step 1/1. In terms of biological role, catalyzes the cyclization of 5-formylamidoimidazole-4-carboxamide ribonucleotide to IMP. The protein is IMP cyclohydrolase of Methanothrix thermoacetophila (strain DSM 6194 / JCM 14653 / NBRC 101360 / PT) (Methanosaeta thermophila).